The chain runs to 302 residues: Nudix hydrolase 5 (302 aa).

The Nudix hydrolase domain occupies 122–254 (SHRIGIGAFV…EGNEMFKLIA (133 aa)). The Nudix box motif lies at 159–180 (GTIKEGESIWAGAVREVKEETD). Glu-174 and Glu-178 together coordinate Mg(2+).

This sequence belongs to the Nudix hydrolase family. Requires Mg(2+) as cofactor. It depends on Mn(2+) as a cofactor. As to expression, expressed in roots, stems and leaves.

Probably mediates the hydrolysis of some nucleoside diphosphate derivatives. The chain is Nudix hydrolase 5 (NUDT5) from Arabidopsis thaliana (Mouse-ear cress).